The chain runs to 442 residues: Xaa-Pro dipeptidase (442 aa).

Residues Asp245, Asp256, His338, Glu383, and Glu422 each contribute to the Mn(2+) site.

The protein belongs to the peptidase M24B family. Bacterial-type prolidase subfamily. Mn(2+) serves as cofactor.

It carries out the reaction Xaa-L-Pro dipeptide + H2O = an L-alpha-amino acid + L-proline. Its function is as follows. Splits dipeptides with a prolyl residue in the C-terminal position. This is Xaa-Pro dipeptidase from Sodalis glossinidius (strain morsitans).